The sequence spans 569 residues: Urease subunit alpha (569 aa).

Residues 131–569 form the Urease domain; it reads GGFDSHIHFI…LPMAQRYFLF (439 aa). Residues histidine 136, histidine 138, and lysine 219 each contribute to the Ni(2+) site. Lysine 219 is subject to N6-carboxylysine. Residue histidine 221 coordinates substrate. Ni(2+)-binding residues include histidine 248 and histidine 274. Histidine 322 functions as the Proton donor in the catalytic mechanism. Aspartate 362 contacts Ni(2+).

The protein belongs to the metallo-dependent hydrolases superfamily. Urease alpha subunit family. In terms of assembly, heterotrimer of UreA (gamma), UreB (beta) and UreC (alpha) subunits. Three heterotrimers associate to form the active enzyme. Ni cation is required as a cofactor. In terms of processing, carboxylation allows a single lysine to coordinate two nickel ions.

Its subcellular location is the cytoplasm. It catalyses the reaction urea + 2 H2O + H(+) = hydrogencarbonate + 2 NH4(+). The protein operates within nitrogen metabolism; urea degradation; CO(2) and NH(3) from urea (urease route): step 1/1. This is Urease subunit alpha from Ruegeria pomeroyi (strain ATCC 700808 / DSM 15171 / DSS-3) (Silicibacter pomeroyi).